Here is a 346-residue protein sequence, read N- to C-terminus: MTVRVGVIGTGAIGQDHIRRLECKLSGAKVTAVTDVNQDLARKVANTYAKQATVYANDRELIAARDVDAVLVASWGPAHEASVLAALEAGKRVFCEKPLATTADGCMRIVEAEMAHGKRLVQVGFMRRFDSGYLQLKQALEQELVGEPLMVRCIHRNVESAESYTTDMAITDTLIHEIDVLHWLLNDEYQHVRVLYPKKTKHALPHLQDPQLVLLETKKGVIIQAEIFVNCKYGYDIQCEIAGEEGVISLPDVPAVRLCSNGRKGTEVLQDWKKRFEAAYDVELQAFIDDGLKDEPASGPSAWDGYVAAVTADACVKAQESGREESIELPKKPAFYQHSAATPEQV.

Residues 322-331 (GREESIELPK) are compositionally biased toward basic and acidic residues. Positions 322–346 (GREESIELPKKPAFYQHSAATPEQV) are disordered.

This sequence belongs to the Gfo/Idh/MocA family. Homotetramer.

The catalysed reaction is myo-inositol + NAD(+) = scyllo-inosose + NADH + H(+). The enzyme catalyses 1D-chiro-inositol + NAD(+) = scyllo-inosine + NADH + H(+). It participates in polyol metabolism; myo-inositol degradation into acetyl-CoA; acetyl-CoA from myo-inositol: step 1/7. Its function is as follows. Involved in the oxidation of myo-inositol (MI) and D-chiro-inositol (DCI) to 2-keto-myo-inositol (2KMI or 2-inosose) and 1-keto-D-chiro-inositol (1KDCI), respectively. The polypeptide is Inositol 2-dehydrogenase/D-chiro-inositol 3-dehydrogenase (Shouchella clausii (strain KSM-K16) (Alkalihalobacillus clausii)).